Consider the following 505-residue polypeptide: RNA-splicing ligase RtcB homolog (505 aa).

5 residues coordinate Mn(2+): Asp-119, Cys-122, His-227, His-259, and His-353. Position 226 to 230 (226 to 230 (NHYGE)) interacts with GMP. GMP-binding positions include 353–354 (HN), 402–405 (GGTM), Ser-409, 428–431 (HGAG), and Lys-504. The GMP-histidine intermediate role is filled by His-428.

It belongs to the RtcB family. In terms of assembly, catalytic component of the tRNA-splicing ligase complex. Mn(2+) serves as cofactor.

The catalysed reaction is a 3'-end 3'-phospho-ribonucleotide-RNA + a 5'-end dephospho-ribonucleoside-RNA + GTP = a ribonucleotidyl-ribonucleotide-RNA + GMP + diphosphate. It carries out the reaction a 3'-end 2',3'-cyclophospho-ribonucleotide-RNA + a 5'-end dephospho-ribonucleoside-RNA + GTP + H2O = a ribonucleotidyl-ribonucleotide-RNA + GMP + diphosphate + H(+). In terms of biological role, catalytic subunit of the tRNA-splicing ligase complex that acts by directly joining spliced tRNA halves to mature-sized tRNAs by incorporating the precursor-derived splice junction phosphate into the mature tRNA as a canonical 3',5'-phosphodiester. May act as an RNA ligase with broad substrate specificity, and may function toward other RNAs. The sequence is that of RNA-splicing ligase RtcB homolog from Brugia malayi (Filarial nematode worm).